We begin with the raw amino-acid sequence, 232 residues long: MTNADPHELQKFSDLAHRWWDPNAEFKPLHELNPIRLSWIDAHAHLTGKTVLDIGCGGGILSESMASLGAHVKGIDLSTQALGVADLHSLESGVTVDYEEIAAEALAAREPGTYDVVTCMEMLEHVPQPAAIVEACRTLVKPGGWVFFSTLNRNVKSYLFAVIGAEYIAQMLPKGTHDYARFIRPSELASFARATNLRTADIKGIVYNPLSKHFTLSADTSVNYMLACRRDA.

S-adenosyl-L-methionine contacts are provided by Arg-36, Gly-55, Asp-76, and Met-120.

This sequence belongs to the methyltransferase superfamily. UbiG/COQ3 family.

It catalyses the reaction a 3-demethylubiquinol + S-adenosyl-L-methionine = a ubiquinol + S-adenosyl-L-homocysteine + H(+). It carries out the reaction a 3-(all-trans-polyprenyl)benzene-1,2-diol + S-adenosyl-L-methionine = a 2-methoxy-6-(all-trans-polyprenyl)phenol + S-adenosyl-L-homocysteine + H(+). Its pathway is cofactor biosynthesis; ubiquinone biosynthesis. O-methyltransferase that catalyzes the 2 O-methylation steps in the ubiquinone biosynthetic pathway. In Paraburkholderia xenovorans (strain LB400), this protein is Ubiquinone biosynthesis O-methyltransferase.